The sequence spans 95 residues: Small ribosomal subunit protein bS16 (95 aa).

Belongs to the bacterial ribosomal protein bS16 family.

The protein is Small ribosomal subunit protein bS16 of Thermotoga maritima (strain ATCC 43589 / DSM 3109 / JCM 10099 / NBRC 100826 / MSB8).